The chain runs to 1036 residues: Integrin alpha-9 (1036 aa).

A signal peptide spans 1-28 (MGGPAAARTGAGGLRALLLALVAAGVPA). The Extracellular portion of the chain corresponds to 29–981 (GAYNLDAQRP…NLEPRGYVVG (953 aa)). FG-GAP repeat units follow at residues 36–97 (QRPV…PDRR), 109–175 (RGAP…AKGK), 183–233 (EYKK…NTYF), 234–290 (KLND…SGTL), 291–350 (IKIF…GALE), 352–409 (QLTL…GIVP), and 412–475 (SMKL…LPGS). 3 cysteine pairs are disulfide-bonded: Cys-88-Cys-98, Cys-143-Cys-163, and Cys-180-Cys-195. Asn-226 carries an N-linked (GlcNAc...) asparagine glycan. The Ca(2+) site is built by Asp-313, Asn-315, Asp-317, Asp-321, Asp-374, Asp-376, Asp-378, Asp-382, Asp-436, Asp-438, Asn-440, and Asp-444. Cys-483 and Cys-492 form a disulfide bridge. Residues Asn-494 and Asn-515 are each glycosylated (N-linked (GlcNAc...) asparagine). 3 disulfides stabilise this stretch: Cys-498–Cys-556, Cys-621–Cys-626, and Cys-697–Cys-707. N-linked (GlcNAc...) asparagine glycosylation is present at Asn-808. Disulfide bonds link Cys-856/Cys-892 and Cys-899/Cys-904. A helical transmembrane segment spans residues 982-1002 (WIIAISLLVGILIFLLLAVLL). Residues 1003–1036 (WKMGFFRRRYKEIIEAEKNRKENEDGWDWVQKNQ) lie on the Cytoplasmic side of the membrane. A GFFKR motif motif is present at residues 1006 to 1010 (GFFRR).

This sequence belongs to the integrin alpha chain family. Heterodimer of an alpha and a beta subunit. Alpha-9 (ITGA9) associates with beta-1 (ITGB1). Integrin ITGA9:ITGB1 interacts with FBLN5 (via N-terminus). Integrin ITGA9:ITGB1 interacts with SPP1/OPN (via N-terminus). Integrin ITGA9:ITGB1 interacts with TNC/TNFN3 (via the 3rd Fibronectin type-III domain). Integrin ITGA9:ITGB1 interacts with SVEP1/polydom (via Sushi domain 21); thereby inhibits Ca(2+) intracellular signaling and as a result represses vasocontraction. In terms of tissue distribution, expressed in the media layer of the arterial wall (at protein level). Expressed in the airway epithelium, skeletal muscle, basal keratincytes, the basal epithelium of the cornea, hepatocytes, giant cells in the spleen and smooth muscle of the stomach, duodenum and veins (at protein level).

It is found in the membrane. Its function is as follows. Integrin alpha-9/beta-1 (ITGA9:ITGB1) is a receptor for VCAM1, cytotactin and osteopontin. It recognizes the sequence A-E-I-D-G-I-E-L in cytotactin. ITGA9:ITGB1 may play a crucial role in SVEP1/polydom-mediated myoblast cell adhesion. Integrin ITGA9:ITGB1 represses PRKCA-mediated L-type voltage-gated channel Ca(2+) influx and ROCK-mediated calcium sensitivity in vascular smooth muscle cells via its interaction with SVEP1, thereby inhibiting vasocontraction. This is Integrin alpha-9 from Mus musculus (Mouse).